Here is a 591-residue protein sequence, read N- to C-terminus: Paxillin (591 aa).

At Met1 the chain carries N-acetylmethionine. Asp2 carries the N-acetylserine modification. The short motif at 3–15 (DLDALLADLESTT) is the LD motif 1 element. Residues 17–138 (HISKRPVFLS…PSPTVMSTSL (122 aa)) form a disordered region. A Phosphotyrosine; by PTK6 modification is found at Tyr31. Residues 45–54 (VPPPVPPPPS) show a composition bias toward pro residues. Residues 69–106 (WQPSSSRFIHQQPQSSSPVYGSSAKTSSVSNPQDSVGS) show a composition bias toward polar residues. Residues Ser83 and Ser85 each carry the phosphoserine modification. Tyr88 carries the post-translational modification Phosphotyrosine. Ser106 bears the Phosphoserine mark. Tyr118 bears the Phosphotyrosine; by PTK6 mark. Residues Ser119, Ser126, and Ser130 each carry the phosphoserine modification. Residues 121 to 137 (PNKQKSAEPSPTVMSTS) show a composition bias toward polar residues. Thr132 carries the phosphothreonine modification. Ser137, Ser140, and Ser143 each carry phosphoserine. Positions 144 to 156 (ELDRLLLELNAVQ) match the LD motif 2 motif. The segment at 159-260 (PPGFPADEAN…TQQQTRISAS (102 aa)) is disordered. Position 181 is a phosphotyrosine (Tyr181). Positions 216-228 (SVESLLDELESSV) match the LD motif 3 motif. Phosphoserine is present on Ser230. The segment covering 236-260 (TVNQGEMSSPQRVTSTQQQTRISAS) has biased composition (polar residues). Ser244 carries the phosphoserine; by CDK5 modification. Residue Ser250 is modified to Phosphoserine; by SLK. Phosphoserine is present on residues Ser258, Ser261, Ser272, Ser303, Ser322, Ser332, and Ser340. The interval 262-315 (ATRELDELMASLSDFKIQGLEQRADGERCWAAGWPRDGGRSSPGGQDEGGFMAQ) is required for binding to PARVA and ILK. Positions 265 to 276 (ELDELMASLSDF) match the LD motif 4 motif. The disordered stretch occupies residues 291-335 (WAAGWPRDGGRSSPGGQDEGGFMAQGKTGSSSPPGGPPKPGSQLD). Residues 333 to 345 (QLDSMLGSLQSDL) carry the LD motif 5 motif. 4 LIM zinc-binding domains span residues 356–415 (GVCG…LFSP), 416–473 (RCYY…DMFA), 474–533 (PKCG…RRGS), and 534–591 (LCSG…KLFC). Ser533 carries the post-translational modification Phosphoserine.

Belongs to the paxillin family. As to quaternary structure, interacts in vitro with VCL/vinculin as well as to the SH3 domain of SRC and, when tyrosine phosphorylated, to the SH2 domain of CRK. Interacts with GIT1. Interacts with NUDT16L1/SDOS. Interacts with PTK2/FAK1. Interacts with PTK2B/PYK2. Interacts with ASAP2. Interacts with unphosphorylated ITGA4. Interacts with RNF5. Interacts with PDCD10. Interacts with NEK3, the interaction is prolactin-dependent. Interacts with PTK6. Interacts with TGFB1I1. Interacts with SORBS1. Interacts with PARVB. Interacts (via LD motif 4) with PARVA/PARVIN. Interacts (via LD motif 4) with ILK. Interacts (via cytoplasmic domain) with CEACAM1; the interaction is phosphotyrosyl-dependent. Interacts with LIMA1; this complex stabilizes actin dynamics. Interacts with CD36 (via C-terminus). Interacts with TRIM15. Interacts with PAK4; PAK4 acts as a scaffold to suppport PAXI phosphorylation at Ser-272. In terms of assembly, interacts strongly with PTK2/FAK1 and weakly with VCL/vinculin. Interacts strongly with VCL/vinculin but only weakly with PTK2/FAK1. Phosphorylated by MAPK1/ERK2. Phosphorylated on tyrosine residues during integrin-mediated cell adhesion, embryonic development, fibroblast transformation and following stimulation of cells by mitogens. Phosphorylation at Ser-244 by CDK5 reduces its interaction with PTK2/FAK1 in matrix-cell focal adhesions (MCFA) during oligodendrocytes (OLs) differentiation. Phosphorylation at Tyr-31 and Tyr-118 by PTK6 promote the activation of RAC1 via CRK/CrKII, thereby promoting migration and invasion. Phosphorylation at Ser-250 by SLK is required for PXN redistribution and cell motility. Phosphorylation at Ser-272 promotes focal adhesion disassembly during cell migration.

Its subcellular location is the cytoplasm. It localises to the cytoskeleton. It is found in the cell junction. The protein localises to the focal adhesion. The protein resides in the cell cortex. In terms of biological role, cytoskeletal protein involved in actin-membrane attachment at sites of cell adhesion to the extracellular matrix (focal adhesion). Recruits other proteins such as TRIM15 to focal adhesion. In Homo sapiens (Human), this protein is Paxillin.